Reading from the N-terminus, the 404-residue chain is Phosphoglycerate kinase (404 aa).

Residues 22 to 24 (DFN), Arg-37, 60 to 63 (HLGR), Arg-120, and Arg-160 contribute to the substrate site. ATP contacts are provided by residues Lys-215, Glu-333, and 360–363 (GGDS).

Belongs to the phosphoglycerate kinase family. As to quaternary structure, monomer.

The protein resides in the cytoplasm. It carries out the reaction (2R)-3-phosphoglycerate + ATP = (2R)-3-phospho-glyceroyl phosphate + ADP. The protein operates within carbohydrate degradation; glycolysis; pyruvate from D-glyceraldehyde 3-phosphate: step 2/5. This chain is Phosphoglycerate kinase, found in Latilactobacillus sakei subsp. sakei (strain 23K) (Lactobacillus sakei subsp. sakei).